Consider the following 340-residue polypeptide: Phosphoribosylformylglycinamidine cyclo-ligase (340 aa).

It belongs to the AIR synthase family.

It localises to the cytoplasm. It carries out the reaction 2-formamido-N(1)-(5-O-phospho-beta-D-ribosyl)acetamidine + ATP = 5-amino-1-(5-phospho-beta-D-ribosyl)imidazole + ADP + phosphate + H(+). The protein operates within purine metabolism; IMP biosynthesis via de novo pathway; 5-amino-1-(5-phospho-D-ribosyl)imidazole from N(2)-formyl-N(1)-(5-phospho-D-ribosyl)glycinamide: step 2/2. The sequence is that of Phosphoribosylformylglycinamidine cyclo-ligase from Acetivibrio thermocellus (strain ATCC 27405 / DSM 1237 / JCM 9322 / NBRC 103400 / NCIMB 10682 / NRRL B-4536 / VPI 7372) (Clostridium thermocellum).